The following is a 240-amino-acid chain: HTH-type transcriptional repressor STM4068 (240 aa).

Residues 9–77 (TPLYKQLFFI…RGSGSVVCSV (69 aa)) form the HTH gntR-type domain. The segment at residues 37–56 (QKEIARSYNVSLIVVKQAWS) is a DNA-binding region (H-T-H motif).

In terms of biological role, represses the expression of the STM4065-STM4067 operon. This Salmonella typhimurium (strain LT2 / SGSC1412 / ATCC 700720) protein is HTH-type transcriptional repressor STM4068.